Consider the following 179-residue polypeptide: FADH(2)-dependent resorcinol hydroxylase, reductase component (179 aa).

The protein belongs to the non-flavoprotein flavin reductase family. As to quaternary structure, the FADH(2)-dependent resorcinol hydroxylase is composed of two subunits, GraA (the oxygenase component) and GraD (the reductase component). Both subunits are required for activity.

The enzyme catalyses FADH2 + NAD(+) = FAD + NADH + 2 H(+). It participates in aromatic compound metabolism. In terms of biological role, involved in the gamma-resorcylate (2,6-dihydroxybenzoate) catabolism. Reductase component of the resorcinol hydroxylase, which catalyzes the FADPH-dependent conversion of resorcinol to hydroxyquinol. Catalyzes the reduction of FAD by NADH. The reduced flavin is then transferred to the oxygenase component GraA. The protein is FADH(2)-dependent resorcinol hydroxylase, reductase component of Rhizobium sp. (strain MTP-10005).